The following is a 477-amino-acid chain: Argininosuccinate synthase (477 aa).

ATP contacts are provided by residues 17 to 25 (AFSGGLDTS) and Ala43. Tyr99 contacts L-citrulline. The ATP site is built by Gly129 and Thr131. L-aspartate is bound by residues Thr131, Asn135, and Asp136. Asn135 provides a ligand contact to L-citrulline. Asp136 is an ATP binding site. Residues Arg139 and Ser192 each coordinate L-citrulline. Asp194 is a binding site for ATP. Positions 201, 203, and 280 each coordinate L-citrulline. The tract at residues 450-477 (DQITENPEVQAEPEEEALDAAAMEAGTD) is disordered. Residues 468–477 (DAAAMEAGTD) are compositionally biased toward low complexity.

Belongs to the argininosuccinate synthase family. Type 2 subfamily. In terms of assembly, homotetramer.

It is found in the cytoplasm. The catalysed reaction is L-citrulline + L-aspartate + ATP = 2-(N(omega)-L-arginino)succinate + AMP + diphosphate + H(+). It functions in the pathway amino-acid biosynthesis; L-arginine biosynthesis; L-arginine from L-ornithine and carbamoyl phosphate: step 2/3. The protein is Argininosuccinate synthase of Nocardioides sp. (strain ATCC BAA-499 / JS614).